The chain runs to 475 residues: GTPase Der (475 aa).

2 EngA-type G domains span residues 3–167 (LTIA…GGER) and 205–380 (LRIA…RVWN). GTP is bound by residues 9–16 (GRPNVGKS), 56–60 (DTAGL), 119–122 (NKSE), 211–218 (GRPNTGKS), 258–262 (DTAGL), and 323–326 (NKWD). A KH-like domain is found at 381 to 465 (RRISTGKLNR…PIRISLRASD (85 aa)).

This sequence belongs to the TRAFAC class TrmE-Era-EngA-EngB-Septin-like GTPase superfamily. EngA (Der) GTPase family. Associates with the 50S ribosomal subunit.

GTPase that plays an essential role in the late steps of ribosome biogenesis. The protein is GTPase Der of Bartonella henselae (strain ATCC 49882 / DSM 28221 / CCUG 30454 / Houston 1) (Rochalimaea henselae).